Reading from the N-terminus, the 244-residue chain is 1-(5-phosphoribosyl)-5-[(5-phosphoribosylamino)methylideneamino] imidazole-4-carboxamide isomerase (244 aa).

The active-site Proton acceptor is the D10. The Proton donor role is filled by D132.

This sequence belongs to the HisA/HisF family.

Its subcellular location is the cytoplasm. The enzyme catalyses 1-(5-phospho-beta-D-ribosyl)-5-[(5-phospho-beta-D-ribosylamino)methylideneamino]imidazole-4-carboxamide = 5-[(5-phospho-1-deoxy-D-ribulos-1-ylimino)methylamino]-1-(5-phospho-beta-D-ribosyl)imidazole-4-carboxamide. It participates in amino-acid biosynthesis; L-histidine biosynthesis; L-histidine from 5-phospho-alpha-D-ribose 1-diphosphate: step 4/9. This is 1-(5-phosphoribosyl)-5-[(5-phosphoribosylamino)methylideneamino] imidazole-4-carboxamide isomerase from Xanthomonas oryzae pv. oryzae (strain MAFF 311018).